The primary structure comprises 39 residues: Photosystem II reaction center protein J (39 aa).

A helical transmembrane segment spans residues 7–27; that stretch reads IPLWIVATVAGTGALVVVGLF.

The protein belongs to the PsbJ family. In terms of assembly, PSII is composed of 1 copy each of membrane proteins PsbA, PsbB, PsbC, PsbD, PsbE, PsbF, PsbH, PsbI, PsbJ, PsbK, PsbL, PsbM, PsbT, PsbX, PsbY, PsbZ, Psb30/Ycf12, peripheral proteins PsbO, CyanoQ (PsbQ), PsbU, PsbV and a large number of cofactors. It forms dimeric complexes.

It is found in the cellular thylakoid membrane. Its function is as follows. One of the components of the core complex of photosystem II (PSII). PSII is a light-driven water:plastoquinone oxidoreductase that uses light energy to abstract electrons from H(2)O, generating O(2) and a proton gradient subsequently used for ATP formation. It consists of a core antenna complex that captures photons, and an electron transfer chain that converts photonic excitation into a charge separation. This chain is Photosystem II reaction center protein J, found in Synechococcus sp. (strain ATCC 27144 / PCC 6301 / SAUG 1402/1) (Anacystis nidulans).